The following is a 192-amino-acid chain: Pyridoxal 5'-phosphate synthase subunit PdxT (192 aa).

46 to 48 (GES) provides a ligand contact to L-glutamine. Catalysis depends on C75, which acts as the Nucleophile. L-glutamine-binding positions include R101 and 129–130 (IR). Active-site charge relay system residues include H166 and E168.

Belongs to the glutaminase PdxT/SNO family. In terms of assembly, in the presence of PdxS, forms a dodecamer of heterodimers. Only shows activity in the heterodimer.

The catalysed reaction is aldehydo-D-ribose 5-phosphate + D-glyceraldehyde 3-phosphate + L-glutamine = pyridoxal 5'-phosphate + L-glutamate + phosphate + 3 H2O + H(+). It catalyses the reaction L-glutamine + H2O = L-glutamate + NH4(+). It functions in the pathway cofactor biosynthesis; pyridoxal 5'-phosphate biosynthesis. Its function is as follows. Catalyzes the hydrolysis of glutamine to glutamate and ammonia as part of the biosynthesis of pyridoxal 5'-phosphate. The resulting ammonia molecule is channeled to the active site of PdxS. This Staphylococcus carnosus (strain TM300) protein is Pyridoxal 5'-phosphate synthase subunit PdxT.